Consider the following 176-residue polypeptide: MEQATLGGGCFWCLEAVYQMVEGIESVVSGYAAGQTKNPDYRSVCSGTTGHAETVQITFDSKVISYFEILEIFWISHDPTTLNRQGNDVGIQYRSIIPYHSPEQKKQAEQSIQKAGEHFSDPIVTQVEILKEFYPAEDYHQNYFRTNPKQAYCHYVIKPKIDKYLKTGFKVKKEGS.

Cys10 is an active-site residue.

The protein belongs to the MsrA Met sulfoxide reductase family.

It catalyses the reaction L-methionyl-[protein] + [thioredoxin]-disulfide + H2O = L-methionyl-(S)-S-oxide-[protein] + [thioredoxin]-dithiol. The catalysed reaction is [thioredoxin]-disulfide + L-methionine + H2O = L-methionine (S)-S-oxide + [thioredoxin]-dithiol. Its function is as follows. Has an important function as a repair enzyme for proteins that have been inactivated by oxidation. Catalyzes the reversible oxidation-reduction of methionine sulfoxide in proteins to methionine. The chain is Peptide methionine sulfoxide reductase MsrA from Leptospira borgpetersenii serovar Hardjo-bovis (strain L550).